The chain runs to 109 residues: Nucleoid-associated protein BCE_0021 (109 aa).

It belongs to the YbaB/EbfC family. As to quaternary structure, homodimer.

It is found in the cytoplasm. Its subcellular location is the nucleoid. In terms of biological role, binds to DNA and alters its conformation. May be involved in regulation of gene expression, nucleoid organization and DNA protection. The protein is Nucleoid-associated protein BCE_0021 of Bacillus cereus (strain ATCC 10987 / NRS 248).